We begin with the raw amino-acid sequence, 458 residues long: Argininosuccinate lyase (458 aa).

It belongs to the lyase 1 family. Argininosuccinate lyase subfamily.

It is found in the cytoplasm. It carries out the reaction 2-(N(omega)-L-arginino)succinate = fumarate + L-arginine. It participates in amino-acid biosynthesis; L-arginine biosynthesis; L-arginine from L-ornithine and carbamoyl phosphate: step 3/3. The sequence is that of Argininosuccinate lyase from Neisseria meningitidis serogroup C (strain 053442).